The following is a 620-amino-acid chain: 1-deoxy-D-xylulose-5-phosphate synthase (620 aa).

Residues His80 and 121–123 (GHS) contribute to the thiamine diphosphate site. Asp152 contacts Mg(2+). Residues 153-154 (GA), Asn181, Tyr288, and Glu370 contribute to the thiamine diphosphate site. Asn181 lines the Mg(2+) pocket.

This sequence belongs to the transketolase family. DXPS subfamily. As to quaternary structure, homodimer. Requires Mg(2+) as cofactor. Thiamine diphosphate is required as a cofactor.

The enzyme catalyses D-glyceraldehyde 3-phosphate + pyruvate + H(+) = 1-deoxy-D-xylulose 5-phosphate + CO2. Its pathway is metabolic intermediate biosynthesis; 1-deoxy-D-xylulose 5-phosphate biosynthesis; 1-deoxy-D-xylulose 5-phosphate from D-glyceraldehyde 3-phosphate and pyruvate: step 1/1. In terms of biological role, catalyzes the acyloin condensation reaction between C atoms 2 and 3 of pyruvate and glyceraldehyde 3-phosphate to yield 1-deoxy-D-xylulose-5-phosphate (DXP). In Shigella boydii serotype 18 (strain CDC 3083-94 / BS512), this protein is 1-deoxy-D-xylulose-5-phosphate synthase.